A 636-amino-acid chain; its full sequence is Probable potassium transport system protein Kup (636 aa).

12 consecutive transmembrane segments (helical) span residues 22-42 (VGLL…SPLY), 64-84 (ILSL…VMFI), 115-135 (LMVI…MITP), 150-170 (FDGI…ALFL), 182-202 (LFGP…VHGI), 220-240 (FFVV…LALT), 261-281 (WFIL…ALLL), 293-313 (LLAP…ATVI), 351-371 (IYIG…VIGF), 383-403 (VAVT…MLLL), 408-428 (PLLA…FFAA), and 433-453 (IAQG…LMST).

This sequence belongs to the HAK/KUP transporter (TC 2.A.72) family.

Its subcellular location is the cell inner membrane. The catalysed reaction is K(+)(in) + H(+)(in) = K(+)(out) + H(+)(out). Its function is as follows. Transport of potassium into the cell. Likely operates as a K(+):H(+) symporter. The chain is Probable potassium transport system protein Kup from Pseudomonas putida (strain ATCC 47054 / DSM 6125 / CFBP 8728 / NCIMB 11950 / KT2440).